Reading from the N-terminus, the 702-residue chain is A-type inclusion protein A25 homolog (702 aa).

The disordered stretch occupies residues 342 to 380 (TNTGIEEPHATGGDKEDQPIKVVHPPNNDKDDAIKSYNP). Positions 347 to 360 (EEPHATGGDKEDQP) are enriched in basic and acidic residues. Coiled coils occupy residues 420–522 (NGGE…RDGK) and 548–692 (EIDK…NNKT).

The protein belongs to the poxviridae A25 protein family. In terms of assembly, interacts (via N-terminus) with protein A26.

It is found in the virion. Functionally, structural protein that forms a matrix surrounding the mature virion (MV) through interaction with protein A26. Presence of protein A25 in the virion structurally prevents direct virus-cell fusion mechanism. The chain is A-type inclusion protein A25 homolog from Variola virus (isolate Human/India/Ind3/1967) (VARV).